Consider the following 256-residue polypeptide: tRNA pseudouridine synthase A (256 aa).

The active-site Nucleophile is the aspartate 43. Residue tyrosine 94 participates in substrate binding.

It belongs to the tRNA pseudouridine synthase TruA family.

It carries out the reaction uridine(38/39/40) in tRNA = pseudouridine(38/39/40) in tRNA. In terms of biological role, formation of pseudouridine at positions 38, 39 and 40 in the anticodon stem and loop of transfer RNAs. This is tRNA pseudouridine synthase A from Pyrobaculum aerophilum (strain ATCC 51768 / DSM 7523 / JCM 9630 / CIP 104966 / NBRC 100827 / IM2).